Here is a 197-residue protein sequence, read N- to C-terminus: Phosphoheptose isomerase (197 aa).

An SIS domain is found at 34-196 (MVQCLLGGNK…DRTLFPQDEQ (163 aa)). 49–51 (NGG) provides a ligand contact to substrate. The Zn(2+) site is built by His58 and Glu62. Substrate is bound by residues Glu62, 91–92 (ND), 117–119 (STS), Ser122, and Gln172. Zn(2+) is bound by residues Gln172 and His180.

The protein belongs to the SIS family. GmhA subfamily. Homotetramer. Requires Zn(2+) as cofactor.

It is found in the cytoplasm. It carries out the reaction 2 D-sedoheptulose 7-phosphate = D-glycero-alpha-D-manno-heptose 7-phosphate + D-glycero-beta-D-manno-heptose 7-phosphate. The protein operates within carbohydrate biosynthesis; D-glycero-D-manno-heptose 7-phosphate biosynthesis; D-glycero-alpha-D-manno-heptose 7-phosphate and D-glycero-beta-D-manno-heptose 7-phosphate from sedoheptulose 7-phosphate: step 1/1. Catalyzes the isomerization of sedoheptulose 7-phosphate in D-glycero-D-manno-heptose 7-phosphate. This Shewanella oneidensis (strain ATCC 700550 / JCM 31522 / CIP 106686 / LMG 19005 / NCIMB 14063 / MR-1) protein is Phosphoheptose isomerase.